A 397-amino-acid polypeptide reads, in one-letter code: GPI mannosyltransferase 1 (397 aa).

Helical transmembrane passes span 5–25 (ECLL…YGIY), 79–99 (WVHF…VMVM), 111–128 (LILA…TVST), 156–176 (GFVY…ALPI), 193–213 (LTMG…MYYI), 257–277 (WAEF…YVLW), 307–327 (YFIW…LSGA), 330–350 (IFLI…GYLL), and 362–382 (LFSA…QFIL).

It belongs to the PIGM family.

The protein resides in the endoplasmic reticulum membrane. The protein operates within glycolipid biosynthesis; glycosylphosphatidylinositol-anchor biosynthesis. Its function is as follows. Mannosyltransferase involved in glycosylphosphatidylinositol-anchor biosynthesis. Transfers the first alpha-1,4-mannose to GlcN-acyl-PI during GPI precursor assembly. Required for cell wall integrity. This Eremothecium gossypii (strain ATCC 10895 / CBS 109.51 / FGSC 9923 / NRRL Y-1056) (Yeast) protein is GPI mannosyltransferase 1 (GPI14).